Here is a 704-residue protein sequence, read N- to C-terminus: Polyribonucleotide nucleotidyltransferase (704 aa).

Positions 487 and 493 each coordinate Mg(2+). The 60-residue stretch at 554–613 folds into the KH domain; it reads PRLLTIKIHPDKIREVIGKGGSTIQAITKETGTQIDIQDDGTIIIASVNAIAAQAAKSRI. An S1 motif domain is found at 623-691; that stretch reads GRIYEGKVAK…KQGRIRLSIK (69 aa).

Belongs to the polyribonucleotide nucleotidyltransferase family. In terms of assembly, component of the RNA degradosome, which is a multiprotein complex involved in RNA processing and mRNA degradation. Mg(2+) serves as cofactor.

The protein localises to the cytoplasm. The catalysed reaction is RNA(n+1) + phosphate = RNA(n) + a ribonucleoside 5'-diphosphate. In terms of biological role, involved in mRNA degradation. Catalyzes the phosphorolysis of single-stranded polyribonucleotides processively in the 3'- to 5'-direction. The chain is Polyribonucleotide nucleotidyltransferase from Xanthomonas oryzae pv. oryzae (strain MAFF 311018).